The chain runs to 581 residues: Proline--tRNA ligase (581 aa).

This sequence belongs to the class-II aminoacyl-tRNA synthetase family. ProS type 1 subfamily. In terms of assembly, homodimer.

The protein resides in the cytoplasm. The catalysed reaction is tRNA(Pro) + L-proline + ATP = L-prolyl-tRNA(Pro) + AMP + diphosphate. Catalyzes the attachment of proline to tRNA(Pro) in a two-step reaction: proline is first activated by ATP to form Pro-AMP and then transferred to the acceptor end of tRNA(Pro). As ProRS can inadvertently accommodate and process non-cognate amino acids such as alanine and cysteine, to avoid such errors it has two additional distinct editing activities against alanine. One activity is designated as 'pretransfer' editing and involves the tRNA(Pro)-independent hydrolysis of activated Ala-AMP. The other activity is designated 'posttransfer' editing and involves deacylation of mischarged Ala-tRNA(Pro). The misacylated Cys-tRNA(Pro) is not edited by ProRS. This chain is Proline--tRNA ligase, found in Rhodococcus opacus (strain B4).